The primary structure comprises 300 residues: ETS homologous factor (300 aa).

A PNT domain is found at 29 to 115 (STCNVSSGFF…SNLQHLKWNG (87 aa)). Positions 183–202 (ESPDMKKEQDPPAKCHTKKH) are disordered. A compositionally biased stretch (basic and acidic residues) spans 185 to 195 (PDMKKEQDPPA). Residues 207–289 (THLWEFIRDI…DGRRLVYKFG (83 aa)) constitute a DNA-binding region (ETS).

The protein belongs to the ETS family.

It is found in the nucleus. In terms of biological role, transcriptional activator that may play a role in regulating epithelial cell differentiation and proliferation. May act as a repressor for a specific subset of ETS/AP-1-responsive genes, and as a modulator of the nuclear response to mitogen-activated protein kinase signaling cascades. Binds to DNA sequences containing the consensus nucleotide core sequence GGAA. Involved in regulation of TNFRSF10B/DR5 expression through Ets-binding sequences on the TNFRSF10B/DR5 promoter. The protein is ETS homologous factor (EHF) of Pan paniscus (Pygmy chimpanzee).